Reading from the N-terminus, the 3739-residue chain is Cardiomyopathy-associated protein 5 (3739 aa).

Disordered stretches follow at residues 1–205 (MESG…PPIT), 268–814 (SLEP…SAFV), 835–884 (VSVS…AIQS), 967–1270 (LSED…SDVP), 1288–1313 (TQAS…RDAK), 1325–1637 (SSAL…NLVS), 1650–1969 (EMNR…EKGK), 1986–2016 (SSIP…AIEP), 2065–2246 (FLSN…WETR), 2273–2318 (AVGE…LALD), 2377–2498 (VYPE…SAVE), 2513–2532 (KKQE…TSKD), and 2579–2616 (SADG…SEDQ). Over residues 18–47 (ADEEVAQELETEEESEGEGEETAAESEEEP) the composition is skewed to acidic residues. Over residues 48-62 (DARLSDEDEEGKTKQ) the composition is skewed to basic and acidic residues. Residues 84-106 (TWETNSSRSSTPWASGESQTSGI) show a composition bias toward polar residues. Positions 130–153 (RTRKRTQKSKRGSPSLRRKGSKKR) are enriched in basic residues. Phosphoserine is present on serine 155. Composition is skewed to polar residues over residues 156–175 (LESQ…SESP) and 325–336 (ADSNLNVPSSTE). Positions 380-406 (ATMVLERAKEELEQNAQGKESSEDDAS) form a coiled coil. Basic and acidic residues-rich tracts occupy residues 479-637 (IVHR…REEE), 644-663 (SIVH…REEE), and 670-730 (SIVH…ERGV). A run of 2 repeats spans residues 482-493 (REEEHAPEPIVH) and 494-505 (REEEHAPEPIVH). The interval 482–720 (REEEHAPEPI…EEHAPEPMVH (239 aa)) is 20 X 12 AA approximate tandem repeats of R-[DE]-[EK]-[EG]-H-[AV]-P-E-[PS]-[IM]-V-[HLR]. The 3; approximate repeat unit spans residues 506 to 519 (REEEHAPEPESIVH). Residues 520–531 (REEEHAPESIVH) form repeat 4. A 5; approximate repeat occupies 532-545 (REEEHAPEPVPIVH). Residues 546-559 (REEEHAPEPESIVH) form a 6; approximate repeat. A run of 4 repeats spans residues 560–571 (REEEHAPEPIVH), 572–583 (RDKGHALEPIVH), 584–595 (REEEHAPEPIVH), and 596–607 (RDEGHAPEPIVH). One copy of the 11; approximate repeat lies at 608 to 621 (REEEHVPEPESIVR). One copy of the 12; approximate repeat lies at 622–633 (KGEEHAPEPIVH). The stretch at 634-647 (REEEQVPEPESIVH) is one 14; approximate repeat. Repeat unit 15 spans residues 648-659 (REEEHAPEPIVH). A 16; approximate repeat occupies 660 to 673 (REEEQVPEPESIVH). 4 consecutive repeat copies span residues 674-685 (REEEHAPEPMVL), 686-696 (REEHAPEPIVR), 697-708 (REEEHAPEPIVH), and 709-720 (REEEHAPEPMVH). The span at 740-756 (TEPEDSSLEEEIIELDY) shows a compositional bias: acidic residues. Serine 850 is subject to Phosphoserine. Polar residues-rich tracts occupy residues 861 to 884 (PAMT…AIQS) and 1151 to 1161 (CLTSPSEQTVL). 2 stretches are compositionally biased toward basic and acidic residues: residues 1188 to 1197 (AETEQNKVEP) and 1230 to 1242 (EHSE…EESS). Residues 1337-1351 (TSVLPTSQPSVSPES) are compositionally biased toward polar residues. Basic and acidic residues-rich tracts occupy residues 1441 to 1460 (LEQR…HSPP) and 1476 to 1486 (TEVKQESKITR). Polar residues predominate over residues 1522–1540 (ASSSATTVPVTKLDSNSTK). 6 stretches are compositionally biased toward basic and acidic residues: residues 1620–1631 (NDKHEEITRSPD), 1697–1706 (IDSRDRDRSL), 1726–1742 (GPAE…ENRK), 1760–1770 (IEQKEPKRTLH), 1786–1803 (DKPE…ENLE), and 1836–1850 (EKPD…DRKP). Positions 1854-1863 (QLESSESTDL) are enriched in polar residues. 4 stretches are compositionally biased toward basic and acidic residues: residues 1874–1885 (DTDHTSETRNQE), 1896–1916 (LSQE…EGRK), 1992–2001 (KVSDNEDLET), and 2153–2165 (ARKE…HKET). The span at 2181–2190 (KSAQSAFTRM) shows a compositional bias: polar residues. The residue at position 2192 (serine 2192) is a Phosphoserine. Composition is skewed to basic and acidic residues over residues 2212 to 2244 (GEDR…DGWE), 2279 to 2299 (RMPE…RLEQ), 2306 to 2318 (KLME…LALD), 2377 to 2419 (VYPE…ETDG), and 2429 to 2448 (ELEK…RRFV). Phosphoserine is present on serine 2411. Serine 2495 bears the Phosphoserine mark. The segment covering 2513 to 2523 (KKQETWSDRPT) has biased composition (basic and acidic residues). Positions 2640–2664 (SVDQEESEQMQDKLQYLEEKASFKS) form a coiled coil. Disordered regions lie at residues 2667–2725 (VHDE…QPTV), 2742–2773 (LSPG…SSAE), 2791–2835 (GPEK…GMPL), 2881–2959 (EKNE…EREI), 3027–3047 (LESE…DVNL), and 3111–3174 (PEEP…QKEP). A compositionally biased stretch (basic and acidic residues) spans 2682–2709 (SKLEVPDRKITSLKENKTKETHKTKEEI). The tract at residues 2731–3041 (YFEKYTLIDY…SSQGNEAGNA (311 aa)) is required for RYR2 clustering. Residues 2762–2773 (KTLTSFPESSAE) show a composition bias toward polar residues. Composition is skewed to basic and acidic residues over residues 2791-2804 (GPEK…HAEM) and 2812-2828 (KPDD…DVDS). Serine 2905 is subject to Phosphoserine. A compositionally biased stretch (basic and acidic residues) spans 2918-2929 (YILKDDILHDES). The segment covering 3030–3047 (EPSSQGNEAGNASPDVNL) has biased composition (polar residues). Residues 3153–3162 (VWDRTEDQSA) are compositionally biased toward basic and acidic residues. The amphipathic helix H1 stretch occupies residues 3187–3214 (KSLVSEMDKALDIHKDHEVSALDTAISA). The tract at residues 3215-3342 (VKVQLGEFLE…ERLLSAMEST (128 aa)) is B-box coiled-coil; BBC. Residues 3244–3323 (FNTIEEKCSK…REAEELDETV (80 aa)) adopt a coiled-coil conformation. Positions 3301 to 3318 (SMDTAKDTLETIVREAEE) are amphipathic helix H2. Fibronectin type-III domains lie at 3374–3475 (VPQP…TAPS) and 3476–3568 (TPVI…TRGT). Residues 3421-3437 (EINELVEEYRLTVKESC) are amphipathic helix H3. Residues 3550–3735 (NASGTSEQSE…LHLGLEPPDS (186 aa)) form the B30.2/SPRY domain.

As to quaternary structure, interacts with PRKAR2A. Interacts with ACTN2, DES and DTNBP1/dysbindin. Interacts with DMD/dystrophin. Interacts with the calcineurin catalytic subunit PPP3CA. Interacts with TTN. Interacts with CAPN3; this interaction, which results in CMYA5 proteolysis, may protect CAPN3 from autolysis. Interacts with FSD2. In cardiac muscles, identified in a complex composed of FSD2, CMYA5 and RYR2. In terms of processing, phosphorylated by PKA. As to expression, expressed in skin as well as in cardiac muscle. Expressed in skeletal muscle (at protein level).

The protein resides in the nucleus. The protein localises to the cytoplasm. It localises to the perinuclear region. It is found in the myofibril. Its subcellular location is the sarcomere. The protein resides in the m line. The protein localises to the sarcoplasmic reticulum. In terms of biological role, may serve as an anchoring protein that mediates the subcellular compartmentation of protein kinase A (PKA) via binding to PRKAR2A. May attenuate calcineurin ability to induce slow-fiber gene program in muscle and may negatively modulate skeletal muscle regeneration. Plays a role in the assembly of ryanodine receptor (RYR2) clusters in striated muscle. This is Cardiomyopathy-associated protein 5 (Cmya5) from Mus musculus (Mouse).